Here is a 149-residue protein sequence, read N- to C-terminus: ATP synthase epsilon chain (149 aa).

2 stretches are compositionally biased toward basic and acidic residues: residues 99-116 (DVER…RLEE) and 123-134 (RETHEAARDRAR). Residues 99–149 (DVERAESAEERAKRRLEEGVQEEERETHEAARDRARNRLRVAMGKVGTRQS) form a disordered region.

The protein belongs to the ATPase epsilon chain family. As to quaternary structure, F-type ATPases have 2 components, CF(1) - the catalytic core - and CF(0) - the membrane proton channel. CF(1) has five subunits: alpha(3), beta(3), gamma(1), delta(1), epsilon(1). CF(0) has three main subunits: a, b and c.

It localises to the cell inner membrane. Its function is as follows. Produces ATP from ADP in the presence of a proton gradient across the membrane. The chain is ATP synthase epsilon chain from Salinibacter ruber (strain DSM 13855 / M31).